Consider the following 405-residue polypeptide: Glucose-1-phosphate adenylyltransferase (405 aa).

Alpha-D-glucose 1-phosphate contacts are provided by residues Gly164, Glu179–Lys180, and Ser197.

It belongs to the bacterial/plant glucose-1-phosphate adenylyltransferase family. As to quaternary structure, homotetramer.

The catalysed reaction is alpha-D-glucose 1-phosphate + ATP + H(+) = ADP-alpha-D-glucose + diphosphate. Its pathway is glycan biosynthesis; glycogen biosynthesis. Its function is as follows. Involved in the biosynthesis of ADP-glucose, a building block required for the elongation reactions to produce glycogen. Catalyzes the reaction between ATP and alpha-D-glucose 1-phosphate (G1P) to produce pyrophosphate and ADP-Glc. In Corynebacterium jeikeium (strain K411), this protein is Glucose-1-phosphate adenylyltransferase.